The chain runs to 161 residues: S-ribosylhomocysteine lyase (161 aa).

3 residues coordinate Fe cation: histidine 58, histidine 62, and cysteine 128.

The protein belongs to the LuxS family. As to quaternary structure, homodimer. Fe cation serves as cofactor.

It catalyses the reaction S-(5-deoxy-D-ribos-5-yl)-L-homocysteine = (S)-4,5-dihydroxypentane-2,3-dione + L-homocysteine. Its function is as follows. Involved in the synthesis of autoinducer 2 (AI-2) which is secreted by bacteria and is used to communicate both the cell density and the metabolic potential of the environment. The regulation of gene expression in response to changes in cell density is called quorum sensing. Catalyzes the transformation of S-ribosylhomocysteine (RHC) to homocysteine (HC) and 4,5-dihydroxy-2,3-pentadione (DPD). This is S-ribosylhomocysteine lyase from Bifidobacterium adolescentis (strain ATCC 15703 / DSM 20083 / NCTC 11814 / E194a).